A 358-amino-acid polypeptide reads, in one-letter code: Alanine racemase (358 aa).

The active-site Proton acceptor; specific for D-alanine is the Lys35. Lys35 is subject to N6-(pyridoxal phosphate)lysine. Residue Arg130 participates in substrate binding. Catalysis depends on Tyr255, which acts as the Proton acceptor; specific for L-alanine. Residue Met303 participates in substrate binding.

It belongs to the alanine racemase family. Pyridoxal 5'-phosphate serves as cofactor.

The enzyme catalyses L-alanine = D-alanine. It participates in amino-acid biosynthesis; D-alanine biosynthesis; D-alanine from L-alanine: step 1/1. Its function is as follows. Catalyzes the interconversion of L-alanine and D-alanine. May also act on other amino acids. This chain is Alanine racemase (alr), found in Shewanella baltica (strain OS185).